A 555-amino-acid polypeptide reads, in one-letter code: MDKRHDPSRRIIAPHGTQLSCKSWLTEAPMRMLMNNLHPDVAERPEDLVVYGGIGRAARDWDCYDKIIEVLQRLEDDETLLVQSGKPVGVFRTHADAPRVLIANSNLVPHWANWEHFNELDKLGLAMYGQMTAGSWIYIGTQGIVQGTYETFVSVAKQHFEGISKGKWILTGGLGGMGGAQTLAGTMAGFSVLACEVDETRIDFRLRTRYVDKKATSLDEALAMIEAANQAGKPVSVGLLANAADVFAELVKRGVTPDVVTDQTSAHDPLNGYLPQGWTMAEAAAMRKTDEAAVIKAAKASMAVQVQAMLDLQTAGAATLDYGNNIRQMAFEMGVENAFDFPGFVPAYIRPLFCEGIGPFRWVALSGDPEDIYKTDAKVKELIPDNPLLHNWLDMARERIAFQGLPARICWVGLKDRARLALAFNEMVKNGELSAPVVIGRDHLDSGSVASPNRETESMLDGSDAVSDWPLLNALLNTASGATWVSLHHGGGVGMGFSQHSGVVIVCDGTDAAAKRVGRVLWNDPATGVMRHADAGYEIAKNCAKEQGLDLPMQD.

Residues 52–53 (GG), glutamine 130, 176–178 (GMG), glutamate 196, arginine 201, 242–243 (NA), 263–267 (QTSAH), 273–274 (YL), and tyrosine 322 contribute to the NAD(+) site. Residue cysteine 410 is part of the active site. Glycine 492 lines the NAD(+) pocket.

This sequence belongs to the urocanase family. The cofactor is NAD(+).

The protein localises to the cytoplasm. The enzyme catalyses 4-imidazolone-5-propanoate = trans-urocanate + H2O. It functions in the pathway amino-acid degradation; L-histidine degradation into L-glutamate; N-formimidoyl-L-glutamate from L-histidine: step 2/3. Its function is as follows. Catalyzes the conversion of urocanate to 4-imidazolone-5-propionate. This chain is Urocanate hydratase, found in Shewanella putrefaciens (strain CN-32 / ATCC BAA-453).